Reading from the N-terminus, the 203-residue chain is Thymidylate kinase (203 aa).

10–17 (GIDGCGKT) serves as a coordination point for ATP.

This sequence belongs to the thymidylate kinase family.

The catalysed reaction is dTMP + ATP = dTDP + ADP. In terms of biological role, phosphorylation of dTMP to form dTDP in both de novo and salvage pathways of dTTP synthesis. This chain is Thymidylate kinase, found in Thermoanaerobacter pseudethanolicus (strain ATCC 33223 / 39E) (Clostridium thermohydrosulfuricum).